The sequence spans 66 residues: Large ribosomal subunit protein bL35 (66 aa).

Positions 1 to 44 (MPKLKSHRGAAKRFRKTASGAIKRRGAYRNHILTKKSTKQKRHL) are enriched in basic residues. Residues 1 to 48 (MPKLKSHRGAAKRFRKTASGAIKRRGAYRNHILTKKSTKQKRHLRVEA) are disordered.

It belongs to the bacterial ribosomal protein bL35 family.

The sequence is that of Large ribosomal subunit protein bL35 from Legionella pneumophila (strain Corby).